The chain runs to 420 residues: Glucose-1-phosphate adenylyltransferase (420 aa).

Residues Tyr-107, Gly-172, 187–188 (EK), and Ser-205 contribute to the alpha-D-glucose 1-phosphate site.

It belongs to the bacterial/plant glucose-1-phosphate adenylyltransferase family. As to quaternary structure, homotetramer.

The catalysed reaction is alpha-D-glucose 1-phosphate + ATP + H(+) = ADP-alpha-D-glucose + diphosphate. Its pathway is glycan biosynthesis; glycogen biosynthesis. In terms of biological role, involved in the biosynthesis of ADP-glucose, a building block required for the elongation reactions to produce glycogen. Catalyzes the reaction between ATP and alpha-D-glucose 1-phosphate (G1P) to produce pyrophosphate and ADP-Glc. In Rhizobium radiobacter (Agrobacterium tumefaciens), this protein is Glucose-1-phosphate adenylyltransferase.